Here is a 220-residue protein sequence, read N- to C-terminus: Adenylate kinase (220 aa).

Residue 12–17 (GAGKGT) participates in ATP binding. The tract at residues 32–62 (STGDIFRDIVKKENDELGKKIKEIMERGELV) is NMP. AMP contacts are provided by residues Thr-33, Arg-38, 60-62 (ELV), 88-91 (GYPR), and Gln-95. The LID stretch occupies residues 129-166 (ARRICPKCGRIYNLISLPPKEDELCDDCKVKLVQREDD). Arg-130 is a binding site for ATP. 2 residues coordinate Zn(2+): Cys-133 and Cys-136. An ATP-binding site is contributed by 139–140 (IY). Positions 153 and 156 each coordinate Zn(2+). The AMP site is built by Arg-163 and Arg-174. Residue Ile-202 participates in ATP binding.

This sequence belongs to the adenylate kinase family. As to quaternary structure, monomer.

The protein resides in the cytoplasm. It catalyses the reaction AMP + ATP = 2 ADP. It participates in purine metabolism; AMP biosynthesis via salvage pathway; AMP from ADP: step 1/1. Catalyzes the reversible transfer of the terminal phosphate group between ATP and AMP. Plays an important role in cellular energy homeostasis and in adenine nucleotide metabolism. In Thermotoga petrophila (strain ATCC BAA-488 / DSM 13995 / JCM 10881 / RKU-1), this protein is Adenylate kinase.